The following is an 82-amino-acid chain: Putative membrane protein insertion efficiency factor (82 aa).

The protein belongs to the UPF0161 family.

The protein localises to the cell inner membrane. In terms of biological role, could be involved in insertion of integral membrane proteins into the membrane. This chain is Putative membrane protein insertion efficiency factor, found in Rickettsia typhi (strain ATCC VR-144 / Wilmington).